Reading from the N-terminus, the 511-residue chain is Phosphoenolpyruvate carboxylase (511 aa).

It belongs to the PEPCase type 2 family. In terms of assembly, homotetramer. Mg(2+) serves as cofactor.

It carries out the reaction oxaloacetate + phosphate = phosphoenolpyruvate + hydrogencarbonate. In terms of biological role, catalyzes the irreversible beta-carboxylation of phosphoenolpyruvate (PEP) to form oxaloacetate (OAA), a four-carbon dicarboxylic acid source for the tricarboxylic acid cycle. The polypeptide is Phosphoenolpyruvate carboxylase (Saccharolobus islandicus (strain Y.N.15.51 / Yellowstone #2) (Sulfolobus islandicus)).